Here is a 155-residue protein sequence, read N- to C-terminus: SsrA-binding protein (155 aa).

It belongs to the SmpB family.

It is found in the cytoplasm. In terms of biological role, required for rescue of stalled ribosomes mediated by trans-translation. Binds to transfer-messenger RNA (tmRNA), required for stable association of tmRNA with ribosomes. tmRNA and SmpB together mimic tRNA shape, replacing the anticodon stem-loop with SmpB. tmRNA is encoded by the ssrA gene; the 2 termini fold to resemble tRNA(Ala) and it encodes a 'tag peptide', a short internal open reading frame. During trans-translation Ala-aminoacylated tmRNA acts like a tRNA, entering the A-site of stalled ribosomes, displacing the stalled mRNA. The ribosome then switches to translate the ORF on the tmRNA; the nascent peptide is terminated with the 'tag peptide' encoded by the tmRNA and targeted for degradation. The ribosome is freed to recommence translation, which seems to be the essential function of trans-translation. This Helicobacter hepaticus (strain ATCC 51449 / 3B1) protein is SsrA-binding protein.